We begin with the raw amino-acid sequence, 299 residues long: Phosphatidylserine decarboxylase proenzyme (299 aa).

Catalysis depends on charge relay system; for autoendoproteolytic cleavage activity residues Asp90, His147, and Ser254. Catalysis depends on Ser254, which acts as the Schiff-base intermediate with substrate; via pyruvic acid; for decarboxylase activity. Ser254 carries the post-translational modification Pyruvic acid (Ser); by autocatalysis.

It belongs to the phosphatidylserine decarboxylase family. PSD-B subfamily. Prokaryotic type I sub-subfamily. Heterodimer of a large membrane-associated beta subunit and a small pyruvoyl-containing alpha subunit. The cofactor is pyruvate. Is synthesized initially as an inactive proenzyme. Formation of the active enzyme involves a self-maturation process in which the active site pyruvoyl group is generated from an internal serine residue via an autocatalytic post-translational modification. Two non-identical subunits are generated from the proenzyme in this reaction, and the pyruvate is formed at the N-terminus of the alpha chain, which is derived from the carboxyl end of the proenzyme. The autoendoproteolytic cleavage occurs by a canonical serine protease mechanism, in which the side chain hydroxyl group of the serine supplies its oxygen atom to form the C-terminus of the beta chain, while the remainder of the serine residue undergoes an oxidative deamination to produce ammonia and the pyruvoyl prosthetic group on the alpha chain. During this reaction, the Ser that is part of the protease active site of the proenzyme becomes the pyruvoyl prosthetic group, which constitutes an essential element of the active site of the mature decarboxylase.

It localises to the cell membrane. It catalyses the reaction a 1,2-diacyl-sn-glycero-3-phospho-L-serine + H(+) = a 1,2-diacyl-sn-glycero-3-phosphoethanolamine + CO2. The protein operates within phospholipid metabolism; phosphatidylethanolamine biosynthesis; phosphatidylethanolamine from CDP-diacylglycerol: step 2/2. Its function is as follows. Catalyzes the formation of phosphatidylethanolamine (PtdEtn) from phosphatidylserine (PtdSer). In Erwinia tasmaniensis (strain DSM 17950 / CFBP 7177 / CIP 109463 / NCPPB 4357 / Et1/99), this protein is Phosphatidylserine decarboxylase proenzyme.